The primary structure comprises 134 residues: Secretin (134 aa).

Positions 1 to 21 are cleaved as a signal peptide; sequence MATRALLLLLLLPPLLLLAGC. Residues 22-31 constitute a propeptide that is removed on maturation; the sequence is AARPAPPRAP. Position 59 is a valine amide (Val-59). Phosphoserine is present on Ser-63. Positions 63-134 are excised as a propeptide; sequence SQQDPENNTA…PAAEGSPMPP (72 aa).

Belongs to the glucagon family.

It is found in the secreted. In terms of biological role, hormone involved in different processes, such as regulation of the pH of the duodenal content, food intake and water homeostasis. Exerts its biological effects by binding to secretin receptor (SCTR), a G-protein coupled receptor expressed in the basolateral domain of several cells. Acts as a key gastrointestinal hormone by regulating the pH of the duodenal content. Secreted by S cells of the duodenum in the crypts of Lieberkuehn and regulates the pH of the duodenum by (1) inhibiting the secretion of gastric acid from the parietal cells of the stomach and (2) stimulating the production of bicarbonate (NaHCO(3)) from the ductal cells of the pancreas. Production of bicarbonate is essential to neutralize the pH and ensure no damage is done to the small intestine by the gastric acid. In addition to regulating the pH of the duodenal content, plays a central role in diet induced thermogenesis: acts as a non-sympathetic brown fat (BAT) activator mediating prandial thermogenesis, which consequentially induces satiation. Mechanistically, secretin released by the gut after a meal binds to secretin receptor (SCTR) in brown adipocytes, activating brown fat thermogenesis by stimulating lipolysis, which is sensed in the brain and promotes satiation. Also able to stimulate lipolysis in white adipocytes. Also plays an important role in cellular osmoregulation: released into the systemic circulation in response to hyperosmolality and acts at different levels in the hypothalamus, pituitary and kidney to regulate water homeostasis. Also plays a role in the central nervous system, possibly by acting as a neuropeptide hormone: required for hippocampal synaptic function and neural progenitor cells maintenance. This Sus scrofa (Pig) protein is Secretin.